The primary structure comprises 325 residues: Beta-ketoacyl-[acyl-carrier-protein] synthase III (325 aa).

Active-site residues include Cys-116 and His-252. The tract at residues 253-257 (QANLR) is ACP-binding. Asn-282 is an active-site residue.

It belongs to the thiolase-like superfamily. FabH family. As to quaternary structure, homodimer.

It is found in the cytoplasm. The catalysed reaction is malonyl-[ACP] + acetyl-CoA + H(+) = 3-oxobutanoyl-[ACP] + CO2 + CoA. It functions in the pathway lipid metabolism; fatty acid biosynthesis. Catalyzes the condensation reaction of fatty acid synthesis by the addition to an acyl acceptor of two carbons from malonyl-ACP. Catalyzes the first condensation reaction which initiates fatty acid synthesis and may therefore play a role in governing the total rate of fatty acid production. Possesses both acetoacetyl-ACP synthase and acetyl transacylase activities. Its substrate specificity determines the biosynthesis of branched-chain and/or straight-chain of fatty acids. This Xanthomonas campestris pv. campestris (strain ATCC 33913 / DSM 3586 / NCPPB 528 / LMG 568 / P 25) protein is Beta-ketoacyl-[acyl-carrier-protein] synthase III.